A 449-amino-acid polypeptide reads, in one-letter code: Nuclear hormone receptor family member nhr-43 (449 aa).

Residues 44–122 (NIHCRVCERR…VGLNVDAVVG (79 aa)) constitute a DNA-binding region (nuclear receptor). NR C4-type zinc fingers lie at residues 47–68 (CRVC…CRAC) and 84–105 (CRRG…CQKC). The span at 125 to 142 (SPDHVKTTSRDESVKKED) shows a compositional bias: basic and acidic residues. A disordered region spans residues 125-154 (SPDHVKTTSRDESVKKEDEESDTGSEGKSC). The NR LBD domain maps to 200 to 449 (NYNEFTKSRL…SDLNAYLYSI (250 aa)).

The protein localises to the nucleus. Its function is as follows. Ligand-activated transcription factor. Positively modulates expression of homeobox protein lin-39, perhaps by binding to the sequence motif 5'-TGAC-3' in regulatory regions of the lin-39 gene, acting in the embryo, and also in the vulval lineage. The sequence is that of Nuclear hormone receptor family member nhr-43 from Caenorhabditis elegans.